The following is a 577-amino-acid chain: Beta-glucosidase 30 (577 aa).

A signal peptide spans 1-23 (MAKGSWFFIILFIISMLENMINS). Residues glutamine 45, histidine 148, and 193-194 (NE) contribute to the a beta-D-glucoside site. Residue glutamate 194 is the Proton donor of the active site. Cysteine 213 and cysteine 221 form a disulfide bridge. The N-linked (GlcNAc...) asparagine glycan is linked to asparagine 328. Position 338 (tyrosine 338) interacts with a beta-D-glucoside. Asparagine 368 carries N-linked (GlcNAc...) asparagine glycosylation. Residues glutamate 410, tryptophan 460, 467-468 (EW), and phenylalanine 476 contribute to the a beta-D-glucoside site. The active-site Nucleophile is the glutamate 410. 2 N-linked (GlcNAc...) asparagine glycosylation sites follow: asparagine 524 and asparagine 544.

It belongs to the glycosyl hydrolase 1 family.

The catalysed reaction is Hydrolysis of terminal, non-reducing beta-D-glucosyl residues with release of beta-D-glucose.. This is Beta-glucosidase 30 from Arabidopsis thaliana (Mouse-ear cress).